Consider the following 1357-residue polypeptide: Ubiquitin carboxyl-terminal hydrolase 19 (1357 aa).

Disordered stretches follow at residues 1 to 52 (MSAG…PTKD), 162 to 239 (LSPI…SDSA), and 275 to 296 (VSPRSDSVSPVMIRNRDPEKDD). At 1-1330 (MSAGTSATGP…TTSDEGCLRY (1330 aa)) the chain is on the cytoplasmic side. 2 stretches are compositionally biased toward basic and acidic residues: residues 28-52 (DRANQESKDGDPRRVSMPRKEPTKD) and 171-182 (SEPRRAKQEARN). Positions 51-140 (KDELLLDWRQ…VPLLTWPSLL (90 aa)) constitute a CS 1 domain. Residues 194 to 206 (SGASPGAQAGPSA) are compositionally biased toward low complexity. Phosphoserine is present on residues Ser-221 and Ser-283. A CS 2 domain is found at 321-423 (LAFVKNDSYE…RQSQRWGGLE (103 aa)). The tract at residues 432 to 479 (AKVAVPTGPTPLDSTPPGGGPLPLTGQEEARAVEKEKPKARSEDSGLD) is disordered. Positions 437–457 (PTGPTPLDSTPPGGGPLPLTG) are enriched in low complexity. The segment covering 459-475 (EEARAVEKEKPKARSED) has biased composition (basic and acidic residues). The 718-residue stretch at 536–1253 (TGLVNLGNTC…YAYVLFYRRR (718 aa)) folds into the USP domain. Catalysis depends on Cys-545, which acts as the Nucleophile. Cys-830, Cys-833, Cys-847, Cys-850, Cys-856, Cys-860, His-868, and Cys-872 together coordinate Zn(2+). An MYND-type zinc finger spans residues 830-872 (CAACQRKQQSEDEKLKRCTRCYRVGYCNQFCQKTHWPDHKGLC). The interval 962–981 (DTGAHRMWPPADRGPVPSTS) is disordered. The active-site Proton acceptor is His-1204. A compositionally biased stretch (basic and acidic residues) spans 1259-1271 (RPPRAAHAEHHPD). Disordered stretches follow at residues 1259–1278 (RPPRAAHAEHHPDLGPAAEA) and 1292–1320 (AEEEMVPEGPGPLGPWGPQDWVGPPPRGP). A helical membrane pass occupies residues 1331–1351 (FVLGTVAALVALVLNVFYPLV). At 1352–1357 (SQSRWR) the chain is on the lumenal side.

In terms of assembly, interacts with RNF123. Interacts with BIRC2/c-IAP1, BIRC3/c-IAP2 and XIAP/BIRC4. Interacts with HIF1A (via N-terminus). As to expression, expressed in testis, heart, kidney and skeletal muscle. Low levels of expression are detectable in all other tissues screened.

Its subcellular location is the endoplasmic reticulum membrane. It carries out the reaction Thiol-dependent hydrolysis of ester, thioester, amide, peptide and isopeptide bonds formed by the C-terminal Gly of ubiquitin (a 76-residue protein attached to proteins as an intracellular targeting signal).. Deubiquitinating enzyme that regulates the degradation of various proteins by removing ubiquitin moieties, thereby preventing their proteasomal degradation. Stabilizes RNF123, which promotes CDKN1B degradation and contributes to cell proliferation. Decreases the levels of ubiquitinated proteins during skeletal muscle formation and acts to repress myogenesis. Modulates transcription of major myofibrillar proteins. Also involved in turnover of endoplasmic-reticulum-associated degradation (ERAD) substrates. Mechanistically, deubiquitinates and thereby stabilizes several E3 ligases involved in the ERAD pathway including SYVN1 or MARCHF6. Regulates the stability of other E3 ligases including BIRC2/c-IAP1 and BIRC3/c-IAP2 by preventing their ubiquitination. Required for cells to mount an appropriate response to hypoxia by rescuing HIF1A from degradation in a non-catalytic manner and by mediating the deubiquitination of FUNDC1. Attenuates mitochondrial damage and ferroptosis by targeting and stabilizing NADPH oxidase 4/NOX4. Negatively regulates TNF-alpha- and IL-1beta-triggered NF-kappa-B activation by hydrolyzing 'Lys-27'- and 'Lys-63'-linked polyubiquitin chains from MAP3K7. Modulates also the protein level and aggregation of polyQ-expanded huntingtin/HTT through HSP90AA1. The polypeptide is Ubiquitin carboxyl-terminal hydrolase 19 (Usp19) (Rattus norvegicus (Rat)).